The chain runs to 1069 residues: Rab GTPase-activating protein 1 (1069 aa).

Positions 1–79 (MDDKASVGKI…DPPMDDQPGE (79 aa)) are disordered. A compositionally biased stretch (low complexity) spans 7 to 22 (VGKISVSSDSVSTLNS). Position 42 is a phosphoserine (S42). A PID domain is found at 142–298 (EDSVVFSKLT…IFTFSVSLEI (157 aa)). A Phosphoserine modification is found at S360. Residues 482–527 (ERERRKTTASPSVRLPQSGSQSSVIPSPPEDDEEEDNDEPLLSGSG) form a disordered region. A compositionally biased stretch (polar residues) spans 489 to 506 (TASPSVRLPQSGSQSSVI). Acidic residues predominate over residues 510 to 520 (PEDDEEEDNDE). One can recognise a Rab-GAP TBC domain in the interval 566 to 752 (GVPEALRGEV…HIIDLLLCEG (187 aa)). Positions 798–1047 (KKLMELACNM…ALNEVQAAKK (250 aa)) form a coiled coil. T996 is subject to Phosphothreonine.

Interacts with RAB6A and tubulin gamma.

It is found in the cytoplasm. The protein resides in the cytosol. The protein localises to the cytoskeleton. It localises to the microtubule organizing center. Its subcellular location is the centrosome. In terms of biological role, may act as a GTPase-activating protein of RAB6A. May play a role in microtubule nucleation by centrosome. May participate in a RAB6A-mediated pathway involved in the metaphase-anaphase transition. The polypeptide is Rab GTPase-activating protein 1 (RABGAP1) (Homo sapiens (Human)).